The following is a 132-amino-acid chain: MTMTDPIADMLTRVRNANMVRHEKLELPASNIKKEIAEILKSEGFIKNVEYVEDDKQGVLRLFLKYGQNDERVITGLKRISKPGLRVYAKASEMPKVLNGLGIALVSTSEGVITDKEARKRNVGGEIIAYVW.

It belongs to the universal ribosomal protein uS8 family. As to quaternary structure, part of the 30S ribosomal subunit. Contacts proteins S5 and S12.

In terms of biological role, one of the primary rRNA binding proteins, it binds directly to 16S rRNA central domain where it helps coordinate assembly of the platform of the 30S subunit. The sequence is that of Small ribosomal subunit protein uS8 from Staphylococcus aureus (strain USA300).